A 348-amino-acid polypeptide reads, in one-letter code: Phosphoribosylformylglycinamidine cyclo-ligase (348 aa).

The protein belongs to the AIR synthase family.

It is found in the cytoplasm. It carries out the reaction 2-formamido-N(1)-(5-O-phospho-beta-D-ribosyl)acetamidine + ATP = 5-amino-1-(5-phospho-beta-D-ribosyl)imidazole + ADP + phosphate + H(+). Its pathway is purine metabolism; IMP biosynthesis via de novo pathway; 5-amino-1-(5-phospho-D-ribosyl)imidazole from N(2)-formyl-N(1)-(5-phospho-D-ribosyl)glycinamide: step 2/2. This Cereibacter sphaeroides (strain KD131 / KCTC 12085) (Rhodobacter sphaeroides) protein is Phosphoribosylformylglycinamidine cyclo-ligase.